The chain runs to 459 residues: Alcohol acyl transferase 2 (459 aa).

Catalysis depends on proton acceptor residues H164 and N385.

Belongs to the plant acyltransferase family. In terms of tissue distribution, highly expressed in the cortex and skin of ripe fruit.

Involved in the biosynthesis of volatile esters which confer ripe apple fruit flavor. Alcohol acyl transferase that can use a wide range of alcohols as substrate to produce esters. In Malus domestica (Apple), this protein is Alcohol acyl transferase 2.